The chain runs to 145 residues: Partner of bursicon (145 aa).

Residues Met-1 to Ala-28 form the signal peptide. Cystine bridges form between Cys-36-Cys-94, Cys-60-Cys-109, Cys-69-Cys-135, Cys-73-Cys-137, and Cys-91-Cys-140. The region spanning Cys-36 to Glu-131 is the CTCK domain.

Heterodimer of burs and pburs.

Its subcellular location is the secreted. Functionally, final heterodimeric neurohormone released at the end of the molting cycle, involved in the sclerotization (tanning) of the insect cuticle, melanization and wing spreading. This is Partner of bursicon (pburs) from Apis mellifera (Honeybee).